The chain runs to 319 residues: Ferrochelatase (319 aa).

Fe cation is bound by residues H192 and E271.

The protein belongs to the ferrochelatase family.

It is found in the cytoplasm. The enzyme catalyses heme b + 2 H(+) = protoporphyrin IX + Fe(2+). It participates in porphyrin-containing compound metabolism; protoheme biosynthesis; protoheme from protoporphyrin-IX: step 1/1. In terms of biological role, catalyzes the ferrous insertion into protoporphyrin IX. This Geotalea daltonii (strain DSM 22248 / JCM 15807 / FRC-32) (Geobacter daltonii) protein is Ferrochelatase.